Here is a 232-residue protein sequence, read N- to C-terminus: 2-C-methyl-D-erythritol 4-phosphate cytidylyltransferase (232 aa).

It belongs to the IspD/TarI cytidylyltransferase family. IspD subfamily.

It carries out the reaction 2-C-methyl-D-erythritol 4-phosphate + CTP + H(+) = 4-CDP-2-C-methyl-D-erythritol + diphosphate. It functions in the pathway isoprenoid biosynthesis; isopentenyl diphosphate biosynthesis via DXP pathway; isopentenyl diphosphate from 1-deoxy-D-xylulose 5-phosphate: step 2/6. Catalyzes the formation of 4-diphosphocytidyl-2-C-methyl-D-erythritol from CTP and 2-C-methyl-D-erythritol 4-phosphate (MEP). This Nitrosospira multiformis (strain ATCC 25196 / NCIMB 11849 / C 71) protein is 2-C-methyl-D-erythritol 4-phosphate cytidylyltransferase.